The sequence spans 343 residues: Multidrug resistance protein MdtN (343 aa).

Topologically, residues 1 to 12 are cytoplasmic; that stretch reads MESTPKKAPRSK. A helical; Signal-anchor for type II membrane protein transmembrane segment spans residues 13-33; the sequence is FPALLVVALALVALVFVIWRV. Residues 34–343 are Periplasmic-facing; that stretch reads DSAPSTNDAY…ASAVANLEPQ (310 aa).

The protein belongs to the membrane fusion protein (MFP) (TC 8.A.1) family. In terms of assembly, could be part of a tripartite efflux system composed of MdtN, MdtO and MdtP.

The protein localises to the cell inner membrane. Its function is as follows. Could be involved in resistance to puromycin, acriflavine and tetraphenylarsonium chloride. This Escherichia coli (strain K12) protein is Multidrug resistance protein MdtN (mdtN).